The primary structure comprises 536 residues: Probable cytochrome P450 318a1 (536 aa).

Over residues 439–457 the composition is skewed to basic and acidic residues; the sequence is EEEQLSKGHNDSGSGEKRR. The interval 439 to 460 is disordered; that stretch reads EEEQLSKGHNDSGSGEKRRQRD. A heme-binding site is contributed by Cys-477.

This sequence belongs to the cytochrome P450 family. It depends on heme as a cofactor.

The protein localises to the endoplasmic reticulum membrane. It is found in the microsome membrane. In terms of biological role, may be involved in the metabolism of insect hormones and in the breakdown of synthetic insecticides. This chain is Probable cytochrome P450 318a1 (Cyp318a1), found in Drosophila melanogaster (Fruit fly).